Here is a 251-residue protein sequence, read N- to C-terminus: Hydroxyacylglutathione hydrolase (251 aa).

Zn(2+)-binding residues include His-53, His-55, Asp-57, His-58, His-110, Asp-127, and His-165.

The protein belongs to the metallo-beta-lactamase superfamily. Glyoxalase II family. In terms of assembly, monomer. Zn(2+) serves as cofactor.

It carries out the reaction an S-(2-hydroxyacyl)glutathione + H2O = a 2-hydroxy carboxylate + glutathione + H(+). It functions in the pathway secondary metabolite metabolism; methylglyoxal degradation; (R)-lactate from methylglyoxal: step 2/2. Its function is as follows. Thiolesterase that catalyzes the hydrolysis of S-D-lactoyl-glutathione to form glutathione and D-lactic acid. This chain is Hydroxyacylglutathione hydrolase, found in Escherichia fergusonii (strain ATCC 35469 / DSM 13698 / CCUG 18766 / IAM 14443 / JCM 21226 / LMG 7866 / NBRC 102419 / NCTC 12128 / CDC 0568-73).